The chain runs to 410 residues: Putative F-box/kelch-repeat protein At1g15680 (410 aa).

The region spanning 13–58 (CKRRIELPEELLAEIVARLPFISITRFKSVCKGWRSLIESTYFRHL) is the F-box domain. Kelch repeat units follow at residues 177–227 (VVCM…SLKK) and 274–327 (AYTT…YFPV).

The polypeptide is Putative F-box/kelch-repeat protein At1g15680 (Arabidopsis thaliana (Mouse-ear cress)).